Reading from the N-terminus, the 82-residue chain is Protein MGF 110-5L (82 aa).

Residues 1-28 form the signal peptide; sequence MLVIFLGILGLLANQVSSQLVGQLHPTE. N-linked (GlcNAc...) asparagine; by host glycosylation is present at Asn62.

This sequence belongs to the asfivirus MGF 110 family.

In terms of biological role, plays a role in virus cell tropism, and may be required for efficient virus replication in macrophages. This chain is Protein MGF 110-5L, found in Ornithodoros (relapsing fever ticks).